Here is a 689-residue protein sequence, read N- to C-terminus: FAST kinase domain-containing protein 2, mitochondrial (689 aa).

Serine 113 and serine 126 each carry phosphoserine. One can recognise an RAP domain in the interval 617-674; sequence VAVLCVPKSVYCLNSCHPRGLMAMKIRHLNVMGFHVILIHNWELKKLKMEDAVTFVRK.

Belongs to the FAST kinase family. In terms of assembly, monomer. Found in a complex with GRSF1, DDX28, DHX30 and FASTKD5. Associates with the 16S mitochondrial rRNA (16S mt-rRNA). Forms a regulatory protein-RNA complex, consisting of RCC1L, NGRN, RPUSD3, RPUSD4, TRUB2, FASTKD2 and 16S mt-rRNA. In terms of tissue distribution, ubiquitously expressed. Expression detected in spleen, testis, colon, heart, smooth muscle, kidney, brain, lung, liver, brown and white adipose tissue with highest expression in testis, heart and smooth muscle.

It localises to the mitochondrion matrix. Its subcellular location is the mitochondrion nucleoid. Plays an important role in assembly of the mitochondrial large ribosomal subunit. As a component of a functional protein-RNA module, consisting of RCC1L, NGRN, RPUSD3, RPUSD4, TRUB2, FASTKD2 and 16S mitochondrial ribosomal RNA (16S mt-rRNA), controls 16S mt-rRNA abundance and is required for intra-mitochondrial translation. May play a role in mitochondrial apoptosis. The chain is FAST kinase domain-containing protein 2, mitochondrial (Fastkd2) from Mus musculus (Mouse).